The sequence spans 274 residues: Orotidine 5'-phosphate decarboxylase (274 aa).

The Proton donor role is filled by lysine 95.

This sequence belongs to the OMP decarboxylase family. Type 2 subfamily.

The catalysed reaction is orotidine 5'-phosphate + H(+) = UMP + CO2. It participates in pyrimidine metabolism; UMP biosynthesis via de novo pathway; UMP from orotate: step 2/2. The polypeptide is Orotidine 5'-phosphate decarboxylase (pyrF) (Mycobacterium bovis (strain ATCC BAA-935 / AF2122/97)).